The following is a 3595-amino-acid chain: Replicase polyprotein 1ab (3595 aa).

The C4-type; atypical zinc-finger motif lies at 3-23 (CECPRSNLVVMCSGAFCCVLC). Residues 56–164 (SGLEGRYCAL…PTTIPFNTTG (109 aa)) enclose the Peptidase C31 domain. Catalysis depends on for Nsp1-alpha papain-like cysteine proteinase activity residues C63 and H130. In terms of domain architecture, Peptidase C32 spans 239–350 (LSFEHGRCWL…LKLPGKTYFG (112 aa)). Catalysis depends on for Nsp1-beta papain-like cysteine proteinase activity residues C246 and H309. Active-site for Nsp2 cysteine proteinase activity residues include C378 and H430. Residues 482 to 527 (RRGGGKKSGQSSGVRAPGRTTPDLAGDWGKAVDDQEKTASKVTTDK) form a disordered region. Positions 511 to 520 (KAVDDQEKTA) are enriched in basic and acidic residues. The 104-residue stretch at 633–736 (TFIPPPDGGC…HGWCSSLLSE (104 aa)) folds into the Peptidase C33 domain. Residues 808 to 862 (QVRTVDPSQPAAPLPPVPRPRKRKAAAQQVSKVPSEQDPSLAHDPPEKPDSVRPP) are disordered. A compositionally biased stretch (basic and acidic residues) spans 851–860 (DPPEKPDSVR). Transmembrane regions (helical) follow at residues 922 to 942 (MFFL…AGVI), 951 to 971 (ILCC…AISS), 1019 to 1039 (VALF…VIGV), 1239 to 1259 (IFRT…GYWV), 1316 to 1336 (PYIV…PGII), 1345 to 1365 (ALLP…IIAA), and 1381 to 1401 (AFVD…GWIL). The segment at 922-1039 (MFFLFLGSPL…MVDVLLVIGV (118 aa)) is HD1. The interval 1239–1399 (IFRTALAAAW…VVLTALLVGW (161 aa)) is HD2. The region spanning 1464–1664 (GLLREKTRAS…RLLESSINLE (201 aa)) is the Peptidase S32 domain. Active-site charge relay system; for 3C-like serine proteinase activity residues include H1502, D1527, and S1580. 4 helical membrane-spanning segments follow: residues 1673–1693 (IIVA…PFVV), 1711–1731 (YNYS…IFFI), 1744–1764 (ALIC…IILG), and 1784–1804 (AIAI…LELF). Positions 1687–1804 (LSIPFVVAFF…CVAACCLELF (118 aa)) are HD3. The region spanning 2083-2253 (DMNRLRAIIS…YPYKLHPVRG (171 aa)) is the NiRAN domain. The RdRp catalytic domain maps to 2491–2625 (GRCLETDLAS…LNESDDLPNF (135 aa)). One can recognise an AV ZBD domain in the interval 2746–2812 (GKEVQVCSIC…IPILKDRTKF (67 aa)). Residues C2752, C2755, C2765, C2770, C2773, H2777, H2779, C2782, C2789, H2791, C2798, and C2801 each contribute to the Zn(2+) site. Positions 2862 to 3022 (DLPDGKYSMK…VFELMKKNAL (161 aa)) constitute a (+)RNA virus helicase ATP-binding domain. Residue 2897–2904 (GPPGSGKT) coordinates ATP. A (+)RNA virus helicase C-terminal domain is found at 3023-3157 (HAIYRFGQNI…DGKARVMLSD (135 aa)). Positions 3196 to 3292 (SGSLSPLPRV…LTKFLDGRAV (97 aa)) constitute an AV-Nsp11N/CoV-Nsp15M domain. One can recognise a NendoU domain in the interval 3294–3416 (MEDSVYSTGR…MVWRDQTMYF (123 aa)). Catalysis depends on residues H3325, H3340, and K3369.

The protein belongs to the arteriviridae polyprotein family. In terms of processing, specific enzymatic cleavages in vivo by its own proteases yield mature proteins. There are two alternative pathways for processing. Either nsp4-5 is cleaved, which represents the major pathway or the nsp5-6 and nsp6-7 are processed, which represents the minor pathway. The major pathway occurs when nsp2 acts as a cofactor for nsp4.

It is found in the host membrane. The protein resides in the host cytoplasm. It localises to the host perinuclear region. The catalysed reaction is RNA(n) + a ribonucleoside 5'-triphosphate = RNA(n+1) + diphosphate. The enzyme catalyses ATP + H2O = ADP + phosphate + H(+). It catalyses the reaction uridylyl-uridylyl-ribonucleotide-RNA = a 3'-end uridylyl-2',3'-cyclophospho-uridine-RNA + a 5'-end dephospho-ribonucleoside-RNA. Its function is as follows. The replicase polyprotein 1ab is a multifunctional protein: it contains the activities necessary for the transcription of negative stranded RNA, leader RNA, subgenomic mRNAs and progeny virion RNA as well as proteinases responsible for the cleavage of the polyprotein into functional products. Functionally, the Nsp1 chain is essential for viral subgenomic mRNA synthesis. In terms of biological role, the 3C-like serine proteinase chain is responsible for the majority of cleavages as it cleaves the C-terminus of the polyprotein. Plays a role in viral transcription/replication and prevents the simultaneous activation of host cell dsRNA sensors, such as MDA5/IFIH1, OAS, and PKR. Acts by degrading the 5'-polyuridines generated during replication of the poly(A) region of viral genomic and subgenomic RNAs. Catalyzes a two-step reaction in which a 2'3'-cyclic phosphate (2'3'-cP) is first generated by 2'-O transesterification, which is then hydrolyzed to a 3'-phosphate (3'-P). If not degraded, poly(U) RNA would hybridize with poly(A) RNA tails and activate host dsRNA sensors. Its function is as follows. The helicase chain, which contains a zinc finger structure, displays RNA and DNA duplex-unwinding activities with 5' to 3' polarity. The chain is Replicase polyprotein 1ab (rep) from Simian hemorrhagic fever virus (SHFV).